Reading from the N-terminus, the 267-residue chain is DNA damage-regulated autophagy modulator protein 2 (267 aa).

6 consecutive transmembrane segments (helical) span residues 8–28, 53–73, 87–107, 118–138, 160–180, and 203–223; these read LSFL…FSYI, RCLF…TMYV, LIIK…LGLS, FIVH…YMFV, LLLV…SSIL, and VLHL…FGFF.

Belongs to the DRAM/TMEM150 family. As to expression, expressed in the retina.

Its subcellular location is the lysosome membrane. It is found in the photoreceptor inner segment. The protein localises to the apical cell membrane. Plays a role in the initiation of autophagy. In the retina, might be involved in the process of photoreceptor cells renewal and recycling to preserve visual function. Induces apoptotic cell death when coexpressed with DRAM1. In Mus musculus (Mouse), this protein is DNA damage-regulated autophagy modulator protein 2 (Dram2).